The primary structure comprises 78 residues: Large ribosomal subunit protein bL28 (78 aa).

This sequence belongs to the bacterial ribosomal protein bL28 family.

The protein is Large ribosomal subunit protein bL28 of Pseudoalteromonas atlantica (strain T6c / ATCC BAA-1087).